A 122-amino-acid chain; its full sequence is Large ribosomal subunit protein uL14 (122 aa).

This sequence belongs to the universal ribosomal protein uL14 family. As to quaternary structure, part of the 50S ribosomal subunit. Forms a cluster with proteins L3 and L19. In the 70S ribosome, L14 and L19 interact and together make contacts with the 16S rRNA in bridges B5 and B8.

Functionally, binds to 23S rRNA. Forms part of two intersubunit bridges in the 70S ribosome. This chain is Large ribosomal subunit protein uL14, found in Afipia carboxidovorans (strain ATCC 49405 / DSM 1227 / KCTC 32145 / OM5) (Oligotropha carboxidovorans).